Here is a 607-residue protein sequence, read N- to C-terminus: UvrABC system protein C (607 aa).

The GIY-YIG domain occupies 29-106 (DKPGVYLMKD…IKKHNPKYNI (78 aa)). A UVR domain is found at 211-246 (GAILKALEKKMKEASENLEFERAKEYRDLMEDLKKV).

This sequence belongs to the UvrC family. Interacts with UvrB in an incision complex.

It is found in the cytoplasm. Its function is as follows. The UvrABC repair system catalyzes the recognition and processing of DNA lesions. UvrC both incises the 5' and 3' sides of the lesion. The N-terminal half is responsible for the 3' incision and the C-terminal half is responsible for the 5' incision. This is UvrABC system protein C from Desulfitobacterium hafniense (strain Y51).